A 1009-amino-acid polypeptide reads, in one-letter code: MSGVSEPLSRVKVGTLRPPEGPPEPMVVVPVDVEKEDVRILKVCFYSNSFNPGKNFKLVKCTVQTEIQEIITSILLSGRIGPNIQLAECYGLRLKHMKSDEIHWLHPQMTVGEVQDKYECLHVEAEWRYDLQIRYLPEDFMESLKEDRTTLLYFYQQLRNDYMQRYASKVSEGMALQLGCLELRRFFKDMPHNALDKKSNFELLEKEVGLDLFFPKQMQENLKPKQFRKMIQQTFQQYASLREEECVMKFFNTLAGFANIDQETYRCELIQGWNITVDLVIGPKGIRQLTSQDTKPTCLAEFKQIRSIRCLPLEETQAVLQLGIEGAPQSLSIKTSSLAEAENMADLIDGYCRLQGEHKGSLIIHAKKDGEKRNSLPQIPTLNLESRRSHLSESCSIESDIYAEIPDETLRRPGGPQYGVAREDVVLNRILGEGFFGEVYEGVYTNHKGEKINVAVKTCKKDCTLDNKEKFMSEAVIMKNLDHPHIVKLIGIIEEEPTWIVMELYPYGELGHYLERNKNSLKVPTLVLYALQICKAMAYLESINCVHRDIAVRNILVASPECVKLGDFGLSRYIEDEDYYKASVTRLPIKWMSPESINFRRFTTASDVWMFAVCMWEILSFGKQPFFWLENKDVIGVLEKGDRLPKPELCPPVLYTLMTRCWDYDPSDRPRFTELVCSLSDIYQMERDIAIEQERNARYRPPKILEPTAFQEPPPKPSRPKYKHPPQTNLLAPKLQFQVPEGLCASSPTLTSPMEYPSPVNSLHTPPLHRHNVFKRHSMREEDFIRPSSREEAQQLWEAEKIKMRQVLDRQQKQMVEDSQWLRREERCLDPMVYMNDKSPLTPEKEAGYTEFTGPPQKPPRLGAQSIQPTANLDRTDDLVYHNVMTLVEAVLELKNKLSQLPPEEYVVVVKNVGLNLRKLIGSVDDLLPSLPASSRTEIEGTQKLLNKDLAELINKMRLAQQNAVTSLSEDCKRQMLTASHTLAVDAKNLLDAVDQAKVVANLAHPPAE.

Positions 39 to 359 constitute an FERM domain; sequence RILKVCFYSN…GYCRLQGEHK (321 aa). Residues serine 361, serine 375, and serine 399 each carry the phosphoserine modification. Residue tyrosine 402 is modified to Phosphotyrosine; by autocatalysis. Residues 425–683 enclose the Protein kinase domain; the sequence is VVLNRILGEG…ELVCSLSDIY (259 aa). Residues 431–439, lysine 457, and 503–509 each bind ATP; these read LGEGFFGEV and ELYPYGE. Residue aspartate 549 is the Proton acceptor of the active site. 3 positions are modified to phosphotyrosine: tyrosine 579, tyrosine 580, and tyrosine 722. Positions 702–725 are disordered; it reads PKILEPTAFQEPPPKPSRPKYKHP. Serine 762 is modified (phosphoserine). Threonine 765 is subject to Phosphothreonine. Residues 801–1009 form an interaction with TGFB1I1 region; that stretch reads KIKMRQVLDR…VANLAHPPAE (209 aa). At tyrosine 834 the chain carries Phosphotyrosine. Phosphoserine is present on serine 839. A Phosphothreonine modification is found at threonine 842. Position 849 is a phosphotyrosine (tyrosine 849). The residue at position 866 (serine 866) is a Phosphoserine. The tract at residues 868–1009 is focal adhesion targeting (FAT); sequence QPTANLDRTD…VANLAHPPAE (142 aa). Position 881 is a phosphotyrosine (tyrosine 881).

The protein belongs to the protein kinase superfamily. Tyr protein kinase family. FAK subfamily. In terms of assembly, homodimer, or homooligomer. Interacts with NPHP1, ASAP1, ASAP2, ARHGAP26, SKAP2 and TGFB1I1. The Tyr-402 phosphorylated form interacts with SRC (via SH2 domain) and SRC family members. Forms a signaling complex with EPHA1, LCK and phosphatidylinositol 3-kinase; upon activation by EFNA1. Interacts with GRB2 (via SH2 domain). Interacts with P53/TP53 and MDM2. Interacts with MYLK. Interacts with BCAR1. Interacts with RB1CC1. Interacts with RHOU. Interacts with VAV1. Interacts with PDPK1. Interacts with LPXN and PTPN12. Interacts with SIRPA and SH2D3C. Interacts (hypophosphorylated) with PXN. Interacts with ARHGAP10. Interacts with KCNA2. In terms of processing, phosphorylated on tyrosine residues in response to various stimuli that elevate the intracellular calcium concentration; this activation is indirect and may be mediated by production of reactive oxygen species (ROS). Tyr-402 is the major autophosphorylation site, but other kinases can also phosphorylate Tyr-402. Autophosphorylation occurs in trans, i.e. one subunit of the dimeric receptor phosphorylates tyrosine residues on the other subunit. Phosphorylation at Tyr-402 promotes interaction with SRC and SRC family members, leading to phosphorylation at Tyr-579; Tyr-580 and Tyr-881. Phosphorylation at Tyr-881 is important for interaction with GRB2. Phosphorylated on tyrosine residues upon activation of FGR and PKC. Recruitment by NPHP1 to cell matrix adhesions initiates Tyr-402 phosphorylation. In monocytes, adherence to substrata is required for tyrosine phosphorylation and kinase activation. Angiotensin II, thapsigargin and L-alpha-lysophosphatidic acid (LPA) also induce autophosphorylation and increase kinase activity. Phosphorylation by MYLK promotes ITGB2 activation and is thus essential to trigger neutrophil transmigration during lung injury. Dephosphorylated by PTPN12. In terms of tissue distribution, highly expressed in pulmonary vein endothelial cells, lung and brain (at protein level). Isoform 1 is expressed at high levels in the brain (hippocampus, cerebral cortex and olfactory bulb) and poorly in the spleen and other tissues, whereas isoforms 2 and 3 are expressed in the spleen and brain (highest in cerebellum).

The protein localises to the cytoplasm. It is found in the perinuclear region. The protein resides in the cell membrane. It localises to the cell projection. Its subcellular location is the lamellipodium. The protein localises to the cell cortex. It is found in the nucleus. The protein resides in the cell junction. It localises to the focal adhesion. The enzyme catalyses L-tyrosyl-[protein] + ATP = O-phospho-L-tyrosyl-[protein] + ADP + H(+). Its activity is regulated as follows. Activated in response to stimuli that lead to increased intracellular Ca(2+) levels; this activation is indirect and may be mediated by calcium-mediated production of reactive oxygen species (ROS). Activated by autophosphorylation at Tyr-402; this creates a binding site for SRC family kinases and leads to phosphorylation at additional tyrosine residues. Phosphorylation at Tyr-402, Tyr-579 and Tyr-580 is required for optimal kinase activity. Functionally, non-receptor protein-tyrosine kinase that regulates reorganization of the actin cytoskeleton, cell polarization, cell migration, adhesion, spreading and bone remodeling. Plays a role in the regulation of the humoral immune response, and is required for normal levels of marginal B-cells in the spleen and normal migration of splenic B-cells. Required for normal macrophage polarization and migration towards sites of inflammation. Regulates cytoskeleton rearrangement and cell spreading in T-cells, and contributes to the regulation of T-cell responses. Promotes osteoclastic bone resorption; this requires both PTK2B/PYK2 and SRC. May inhibit differentiation and activity of osteoprogenitor cells. Functions in signaling downstream of integrin and collagen receptors, immune receptors, G-protein coupled receptors (GPCR), cytokine, chemokine and growth factor receptors, and mediates responses to cellular stress. Forms multisubunit signaling complexes with SRC and SRC family members upon activation; this leads to the phosphorylation of additional tyrosine residues, creating binding sites for scaffold proteins, effectors and substrates. Regulates numerous signaling pathways. Promotes activation of phosphatidylinositol 3-kinase and of the AKT1 signaling cascade. Promotes activation of NOS3. Regulates production of the cellular messenger cGMP. Promotes activation of the MAP kinase signaling cascade, including activation of MAPK1/ERK2, MAPK3/ERK1 and MAPK8/JNK1. Promotes activation of Rho family GTPases, such as RHOA and RAC1. Recruits the ubiquitin ligase MDM2 to P53/TP53 in the nucleus, and thereby regulates P53/TP53 activity, P53/TP53 ubiquitination and proteasomal degradation. Acts as a scaffold, binding to both PDPK1 and SRC, thereby allowing SRC to phosphorylate PDPK1 at 'Tyr-9, 'Tyr-373', and 'Tyr-376'. Promotes phosphorylation of NMDA receptors by SRC family members, and thereby contributes to the regulation of NMDA receptor ion channel activity and intracellular Ca(2+) levels. May also regulate potassium ion transport by phosphorylation of potassium channel subunits. Phosphorylates SRC; this increases SRC kinase activity. Phosphorylates ASAP1, NPHP1, KCNA2 and SHC1. Promotes phosphorylation of ASAP2, RHOU and PXN; this requires both SRC and PTK2/PYK2. The chain is Protein-tyrosine kinase 2-beta (Ptk2b) from Rattus norvegicus (Rat).